The primary structure comprises 188 residues: GTP-dependent dephospho-CoA kinase (188 aa).

GTP is bound by residues aspartate 43, valine 44, aspartate 62, glutamate 121, and aspartate 144.

The protein belongs to the GTP-dependent DPCK family.

It catalyses the reaction 3'-dephospho-CoA + GTP = GDP + CoA + H(+). Its pathway is cofactor biosynthesis; coenzyme A biosynthesis. In terms of biological role, catalyzes the GTP-dependent phosphorylation of the 3'-hydroxyl group of dephosphocoenzyme A to form coenzyme A (CoA). The polypeptide is GTP-dependent dephospho-CoA kinase (Methanococcoides burtonii (strain DSM 6242 / NBRC 107633 / OCM 468 / ACE-M)).